Consider the following 160-residue polypeptide: tRNA (cytidine(34)-2'-O)-methyltransferase (160 aa).

S-adenosyl-L-methionine-binding residues include Leu-78, Gly-100, Ile-120, and Ser-128.

Belongs to the class IV-like SAM-binding methyltransferase superfamily. RNA methyltransferase TrmH family. TrmL subfamily. Homodimer.

It localises to the cytoplasm. It carries out the reaction cytidine(34) in tRNA + S-adenosyl-L-methionine = 2'-O-methylcytidine(34) in tRNA + S-adenosyl-L-homocysteine + H(+). The enzyme catalyses 5-carboxymethylaminomethyluridine(34) in tRNA(Leu) + S-adenosyl-L-methionine = 5-carboxymethylaminomethyl-2'-O-methyluridine(34) in tRNA(Leu) + S-adenosyl-L-homocysteine + H(+). Its function is as follows. Methylates the ribose at the nucleotide 34 wobble position in the two leucyl isoacceptors tRNA(Leu)(CmAA) and tRNA(Leu)(cmnm5UmAA). Catalyzes the methyl transfer from S-adenosyl-L-methionine to the 2'-OH of the wobble nucleotide. The polypeptide is tRNA (cytidine(34)-2'-O)-methyltransferase (Beijerinckia indica subsp. indica (strain ATCC 9039 / DSM 1715 / NCIMB 8712)).